Reading from the N-terminus, the 374-residue chain is All-trans-retinol dehydrogenase [NAD(+)] ADH7 (374 aa).

M1 carries the post-translational modification N-acetylmethionine. Positions 47, 68, 98, 101, 104, 112, and 174 each coordinate Zn(2+). NAD(+) contacts are provided by residues 199 to 204 (GLGGVG), D223, K228, 292 to 294 (VGA), and R369.

It belongs to the zinc-containing alcohol dehydrogenase family. Class-IV subfamily. Homodimer. Zn(2+) is required as a cofactor. In terms of tissue distribution, preferentially expressed in stomach.

Its subcellular location is the cytoplasm. The enzyme catalyses a primary alcohol + NAD(+) = an aldehyde + NADH + H(+). It carries out the reaction 10-hydroxydecanoate + NAD(+) = 10-oxodecanoate + NADH + H(+). The catalysed reaction is all-trans-retinol + NAD(+) = all-trans-retinal + NADH + H(+). It catalyses the reaction 9-cis-retinol + NAD(+) = 9-cis-retinal + NADH + H(+). The enzyme catalyses all-trans-3,4-didehydroretinol + NAD(+) = all-trans-3,4-didehydroretinal + NADH + H(+). It carries out the reaction all-trans-4-hydroxyretinol + NAD(+) = all-trans-4-hydroxyretinal + NADH + H(+). The catalysed reaction is all-trans-4-oxoretinol + NAD(+) = all-trans-4-oxoretinal + NADH + H(+). It catalyses the reaction 12-hydroxydodecanoate + NAD(+) = 12-oxododecanoate + NADH + H(+). The enzyme catalyses 16-hydroxyhexadecanoate + NAD(+) = 16-oxohexadecanoate + NADH + H(+). It carries out the reaction hexan-1-ol + NAD(+) = hexanal + NADH + H(+). The catalysed reaction is (E)-hex-2-en-1-ol + NAD(+) = (E)-hex-2-enal + NADH + H(+). It catalyses the reaction (E)-4-hydroxynon-2-en-1-ol + NAD(+) = (E)-4-hydroxynon-2-enal + NADH + H(+). Retinol oxidation is inhibited by the detergent Tween 80. Ethanol inhibits both all-trans-retinol and 9-cis-retinol oxidation. 13-cis-retinol is an effective competitive inhibitor of the 9-cis-retinol oxidation. All-trans-retinoic acid is a powerful inhibitor of all-trans-retinol oxidation. 13-cis-retinoic acid is a powerful inhibitor of all-trans-retinol oxidation. Cimetidine and ranitidine inhibited ethanol oxidation. In terms of biological role, catalyzes the NAD-dependent oxidation of all-trans-retinol, alcohol, aldehyde and omega-hydroxy fatty acids and their derivatives. Oxidizes preferentially all trans-retinol, all-trans-4-hydroxyretinol, 9-cis-retinol, 2-hexenol, and long chain omega-hydroxy fatty acids such as juniperic acid. In vitro can also catalyze the NADH-dependent reduction of all-trans-retinal and aldehydes and their derivatives. Reduces preferentially all trans-retinal, all-trans-4-oxoretinal and hexanal. Catalyzes in the oxidative direction with higher efficiency. Therefore may participate in retinoid metabolism, fatty acid omega-oxidation, and elimination of cytotoxic aldehydes produced by lipid peroxidation. This Rattus norvegicus (Rat) protein is All-trans-retinol dehydrogenase [NAD(+)] ADH7 (Adh7).